A 473-amino-acid chain; its full sequence is Catalase easC (473 aa).

Over residues 1 to 15 (MASEVSVASSGSEHS) the composition is skewed to low complexity. A disordered region spans residues 1 to 31 (MASEVSVASSGSEHSGAQKCPFQDPGLSSMD). Residue His54 is part of the active site. Tyr344 is a heme binding site. Residues 369 to 388 (DGARPEKAEMAPQKVPSQEH) are disordered.

This sequence belongs to the catalase family. The cofactor is heme.

It functions in the pathway alkaloid biosynthesis; ergot alkaloid biosynthesis. Its function is as follows. Catalase; part of the gene cluster that mediates the biosynthesis of fungal ergot alkaloid. DmaW catalyzes the first step of ergot alkaloid biosynthesis by condensing dimethylallyl diphosphate (DMAP) and tryptophan to form 4-dimethylallyl-L-tryptophan. The second step is catalyzed by the methyltransferase easF that methylates 4-dimethylallyl-L-tryptophan in the presence of S-adenosyl-L-methionine, resulting in the formation of 4-dimethylallyl-L-abrine. The catalase easC and the FAD-dependent oxidoreductase easE then transform 4-dimethylallyl-L-abrine to chanoclavine-I which is further oxidized by easD in the presence of NAD(+), resulting in the formation of chanoclavine-I aldehyde. Agroclavine dehydrogenase easG then mediates the conversion of chanoclavine-I aldehyde to agroclavine via a non-enzymatic adduct reaction: the substrate is an iminium intermediate that is formed spontaneously from chanoclavine-I aldehyde in the presence of glutathione. The presence of easA is not required to complete this reaction. Further conversion of agroclavine to paspalic acid is a two-step process involving oxidation of agroclavine to elymoclavine and of elymoclavine to paspalic acid, the second step being performed by the elymoclavine oxidase cloA. Paspalic acid is then further converted to D-lysergic acid. Ergopeptines are assembled from D-lysergic acid and three different amino acids by the D-lysergyl-peptide-synthetases composed each of a monomudular and a trimodular nonribosomal peptide synthetase subunit. LpsB and lpsC encode the monomodular subunits responsible for D-lysergic acid activation and incorporation into the ergopeptine backbone. LpsA1 and A2 subunits encode the trimodular nonribosomal peptide synthetase assembling the tripeptide portion of ergopeptines. LpsA1 is responsible for formation of the major ergopeptine, ergotamine, and lpsA2 for alpha-ergocryptine, the minor ergopeptine of the total alkaloid mixture elaborated by C.purpurea. D-lysergyl-tripeptides are assembled by the nonribosomal peptide synthetases and released as N-(D-lysergyl-aminoacyl)-lactams. Cyclolization of the D-lysergyl-tripeptides is performed by the Fe(2+)/2-ketoglutarate-dependent dioxygenase easH which introduces a hydroxyl group into N-(D-lysergyl-aminoacyl)-lactam at alpha-C of the aminoacyl residue followed by spontaneous condensation with the terminal lactam carbonyl group. This chain is Catalase easC, found in Claviceps purpurea (Ergot fungus).